The primary structure comprises 1220 residues: Cullin-associated NEDD8-dissociated protein 1 (1220 aa).

HEAT repeat units follow at residues 1–35 (MEEGILLKKYVESSDKDIRYMALSDLAARLNDANH), 42–79 (ESFPDTLDVLLQALSDASPEVQQEAVRCVAIISSKIPQ), 121–157 (FYTSTVFPSFLQILKQYNVAQEEFFAILCVVCDSLEI), 259–295 (ADYTNKILSLLKKEEAPDELTQKLLEVLGLLLEYQQV), 365–410 (LSRL…HVPR), 615–650 (IFLRRVLIILCKKLQEEPTRSAAARALCDIFMSVTD), 680–700 (TTAYLELLEVLLKVGQKYLAE), 701–737 (SLLEHILGLLIETLKRNTENTVAILKCLLIIPLSILL), 738–775 (KSKNLLIDTIISHLQSSTIHLNEESVCLLSRIIAVISK), 810–847 (FQSKAIVTSLNKSFMSPKSEVRIKVFTTLIFGQLDYGK), 850–887 (LPANEYFDTIASNLNSPNADVMKAAAIALGSLTSQSEK), and 1020–1057 (EVSQETLQVIISVIKNRRSCIADVYNELLQGLISKSSV).

The protein belongs to the CAND family.

It localises to the nucleus. Its function is as follows. Key assembly factor of SCF (SKP1-CUL1-F-box protein) E3 ubiquitin ligase complexes that promotes the exchange of the substrate-recognition F-box subunit in SCF complexes, thereby playing a key role in the cellular repertoire of SCF complexes. Acts as a F-box protein exchange factor. This Schizosaccharomyces pombe (strain 972 / ATCC 24843) (Fission yeast) protein is Cullin-associated NEDD8-dissociated protein 1 (knd1).